The following is a 445-amino-acid chain: Chromosome partition protein MukF (445 aa).

A leucine-zipper region spans residues 213 to 241 (LSETSATLRELQDTLQAAGDELQTQILDI).

This sequence belongs to the MukF family. In terms of assembly, interacts, and probably forms a ternary complex, with MukE and MukB via its C-terminal region. The complex formation is stimulated by calcium or magnesium. It is required for an interaction between MukE and MukB.

It localises to the cytoplasm. It is found in the nucleoid. In terms of biological role, involved in chromosome condensation, segregation and cell cycle progression. May participate in facilitating chromosome segregation by condensation DNA from both sides of a centrally located replisome during cell division. Not required for mini-F plasmid partitioning. Probably acts via its interaction with MukB and MukE. Overexpression results in anucleate cells. It has a calcium binding activity. The chain is Chromosome partition protein MukF from Vibrio cholerae serotype O1 (strain ATCC 39315 / El Tor Inaba N16961).